The following is a 501-amino-acid chain: Type II secretion system protein E (501 aa).

Position 262–269 (262–269) interacts with ATP; that stretch reads GPTGSGKS. Zn(2+) is bound by residues C395, C398, C428, and C431.

This sequence belongs to the GSP E family. As to quaternary structure, forms homooligomers; most probably hexamers. Interacts with ExeL/GspL. Zn(2+) is required as a cofactor.

The protein resides in the cell inner membrane. It carries out the reaction ATP + H2O + cellular proteinSide 1 = ADP + phosphate + cellular proteinSide 2.. ATPase component of the type II secretion system required for the energy-dependent secretion of extracellular factors such as proteases and toxins from the periplasm. Acts as a molecular motor to provide the energy that is required for assembly of the pseudopilus and the extrusion of substrates generated in the cytoplasm. The chain is Type II secretion system protein E (exeE) from Aeromonas hydrophila.